Consider the following 401-residue polypeptide: Nodal homolog 3-A (401 aa).

The first 18 residues, 1 to 18, serve as a signal peptide directing secretion; that stretch reads MAFLNLFFCLVFISPLMA. A propeptide spanning residues 19–274 is cleaved from the precursor; the sequence is MPPVLQGRKS…KVNGFRRLRR (256 aa). N-linked (GlcNAc...) asparagine glycans are attached at residues asparagine 168, asparagine 337, asparagine 341, and asparagine 344. 2 cysteine pairs are disulfide-bonded: cysteine 299-cysteine 365 and cysteine 328-cysteine 396.

This sequence belongs to the TGF-beta family. In terms of assembly, monomer. The propeptide region interacts with bmp4 in a non-covalent manner. In terms of tissue distribution, expressed in the epithelial layer of the Spemann organizer during gastrulation.

The protein resides in the secreted. In terms of biological role, exhibits mesoderm-dorsalizing activity and neural-inducing activity, but lacks mesoderm-inducing activity. Regulates the expression of specific mesodermal and neural genes. Induces convergent extension movements at the embryonic midline by activating the fgf signaling pathway to induce t/bra expression in the organizer region. Acts with wnt11 to induce Spemann organizer cells and induce axis formation. The unprocessed protein antagonizes bmp-signaling. The chain is Nodal homolog 3-A (nodal3-a) from Xenopus laevis (African clawed frog).